Consider the following 298-residue polypeptide: MLETKDPAIKLFGMKIPFPTVLEVADEEEEKNQNKTLTDQSEKDKTLKKPTKILPCPRCNSMETKFCYYNNYNVNQPRHFCKACQRYWTSGGTMRSVPIGAGRRKNKNNSPTSHYHHVTISETNGPVLSFSLGDDQKVSSNRFGNQKLVARIENNDERSNNNTSNGLNCFPGVSWPYTWNPAFYPVYPYWSMPVLSSPVSSSPTSTLGKHSRDEDETVKQKQRNGSVLVPKTLRIDDPNEAAKSSIWTTLGIKNEVMFNGFGSKKEVKLSNKEETETSLVLCANPAALSRSINFHEQM.

A disordered region spans residues 27-46 (EEEEKNQNKTLTDQSEKDKT). The Dof-type zinc-finger motif lies at 54-108 (LPCPRCNSMETKFCYYNNYNVNQPRHFCKACQRYWTSGGTMRSVPIGAGRRKNKN). Cys-56, Cys-59, Cys-81, and Cys-84 together coordinate Zn(2+). Residues 200-231 (SSSPTSTLGKHSRDEDETVKQKQRNGSVLVPK) are disordered. The segment covering 210 to 219 (HSRDEDETVK) has biased composition (basic and acidic residues).

As to quaternary structure, interacts with ADO2 (via kelch repeats), ADO3 (via kelch repeats) and GI (via N-terminus). Post-translationally, ubiquitinated. As to expression, expressed in the vascular tissues of cotyledons, leaves and hypocotyls and in stomata. Not detected in roots.

Its subcellular location is the nucleus. In terms of biological role, transcription factor that binds specifically to a 5'-AA[AG]G-3' consensus core sequence. A flanking TGT sequence contributes to the specificity of binding. Regulates a photoperiodic flowering response. Transcriptional repressor of 'CONSTANS' expression. The DNA-binding ability is not modulated by 'GIGANTEA' but the stability of CDF1 is controlled by the proteasome-dependent pathway. Ubiquitinated by the SCF(ADO3) E3 ubiquitin ligase complex. Binds to the FT promoter in the morning. The sequence is that of Cyclic dof factor 1 (CDF1) from Arabidopsis thaliana (Mouse-ear cress).